The following is a 54-amino-acid chain: Large ribosomal subunit protein bL33A (54 aa).

The protein belongs to the bacterial ribosomal protein bL33 family.

This chain is Large ribosomal subunit protein bL33A, found in Myxococcus xanthus (strain DK1622).